The sequence spans 514 residues: Peptide chain release factor 3 (514 aa).

The region spanning 8 to 268 (KKRRTFAIIS…TFLEFAPEPH (261 aa)) is the tr-type G domain. GTP-binding positions include 17–24 (SHPDAGKT), 85–89 (DTPGH), and 139–142 (NKLD).

Belongs to the TRAFAC class translation factor GTPase superfamily. Classic translation factor GTPase family. PrfC subfamily.

It localises to the cytoplasm. Its function is as follows. Increases the formation of ribosomal termination complexes and stimulates activities of RF-1 and RF-2. It binds guanine nucleotides and has strong preference for UGA stop codons. It may interact directly with the ribosome. The stimulation of RF-1 and RF-2 is significantly reduced by GTP and GDP, but not by GMP. The sequence is that of Peptide chain release factor 3 from Streptococcus agalactiae serotype Ia (strain ATCC 27591 / A909 / CDC SS700).